The chain runs to 244 residues: uncharacterized protein (244 aa).

Positions 12–80 (VALWRQIADR…QGRGTMIERK (69 aa)) constitute an HTH gntR-type domain. Positions 40-59 (ETALAAEFGVNRHTVRSALA) form a DNA-binding region, H-T-H motif.

This is an uncharacterized protein from Rhizobium meliloti (strain 1021) (Ensifer meliloti).